The primary structure comprises 194 residues: Large ribosomal subunit protein bL12m (194 aa).

A mitochondrion-targeting transit peptide spans 1–33 (MSLRILAKRSSSIWMKTRVTPALISPITITTRF). An N-linked (GlcNAc...) asparagine glycan is attached at Asn-34. The interval 101–120 (AGNVPSSTGEAGSGAEEEAK) is disordered. Positions 105-114 (PSSTGEAGSG) are enriched in low complexity.

Belongs to the bacterial ribosomal protein bL12 family. Component of the mitochondrial large ribosomal subunit (mt-LSU). Mature yeast 74S mitochondrial ribosomes consist of a small (37S) and a large (54S) subunit. The 37S small subunit contains a 15S ribosomal RNA (15S mt-rRNA) and 34 different proteins. The 54S large subunit contains a 21S rRNA (21S mt-rRNA) and 46 different proteins. Post-translationally, N-glycosylated.

The protein localises to the mitochondrion. In terms of biological role, component of the mitochondrial ribosome (mitoribosome), a dedicated translation machinery responsible for the synthesis of mitochondrial genome-encoded proteins, including at least some of the essential transmembrane subunits of the mitochondrial respiratory chain. The mitoribosomes are attached to the mitochondrial inner membrane and translation products are cotranslationally integrated into the membrane. This chain is Large ribosomal subunit protein bL12m (MNP1), found in Saccharomyces cerevisiae (strain ATCC 204508 / S288c) (Baker's yeast).